The primary structure comprises 374 residues: Nucleosome assembly protein 1;3 (374 aa).

Residues 26 to 80 adopt a coiled-coil conformation; it reads VNALKNKLQNLAGQHSDVLENLTPKIRRRVEVLREIQGKHDEIETKFREERAALE. The residue at position 41 (Ser41) is a Phosphoserine. The short motif at 47–62 is the Nuclear export signal element; it reads LTPKIRRRVEVLREIQ. The Nuclear localization signal signature appears at 222 to 227; the sequence is KKKPKK. The segment covering 299-339 has biased composition (acidic residues); it reads IEGEEFEIDNDDEDDIDEDEDEDEEDEDEDEEEDDEDEEEE. The disordered stretch occupies residues 299 to 374; that stretch reads IEGEEFEIDN…GERPPECKQQ (76 aa). Positions 343–355 are enriched in basic residues; the sequence is TKKKPSVLHKKGG. A compositionally biased stretch (basic and acidic residues) spans 364 to 374; sequence QGERPPECKQQ. Cys371 bears the Cysteine methyl ester mark. Cys371 carries the S-farnesyl cysteine lipid modification. The propeptide at 372–374 is removed in mature form; sequence KQQ.

This sequence belongs to the nucleosome assembly protein (NAP) family. As to quaternary structure, can form homomeric and heteromeric protein complexes with NAP1;1, NAP1;2 and NAP1;4. Binds histone H2A and associates with chromatin in vivo. In terms of tissue distribution, ubiquitous.

It localises to the nucleus. Its subcellular location is the cytoplasm. In terms of biological role, may modulate chromatin structure by regulation of nucleosome assembly/disassembly. May function in nucleotide excision repair (NER). Involved in somatic homologous recombination. Could be involved in response to abscisic acid (ABA) and to salt stress. This chain is Nucleosome assembly protein 1;3 (NAP1;3), found in Arabidopsis thaliana (Mouse-ear cress).